Consider the following 75-residue polypeptide: Exodeoxyribonuclease 7 small subunit (75 aa).

It belongs to the XseB family. Heterooligomer composed of large and small subunits.

It localises to the cytoplasm. The catalysed reaction is Exonucleolytic cleavage in either 5'- to 3'- or 3'- to 5'-direction to yield nucleoside 5'-phosphates.. In terms of biological role, bidirectionally degrades single-stranded DNA into large acid-insoluble oligonucleotides, which are then degraded further into small acid-soluble oligonucleotides. The chain is Exodeoxyribonuclease 7 small subunit from Geobacter sp. (strain M21).